Consider the following 457-residue polypeptide: Adenylosuccinate synthetase isozyme 1 (457 aa).

A disordered region spans residues 1-21 (MSGTRASNDRPPGAGGVKRGR). Residues 42–48 (GDEGKGK) and 70–72 (GHT) contribute to the GTP site. Catalysis depends on aspartate 43, which acts as the Proton acceptor. Positions 43 and 70 each coordinate Mg(2+). Aspartate 43 lines the substrate pocket. Residues 43–46 (DEGK), 68–71 (NAGH), threonine 163, arginine 177, asparagine 256, threonine 271, and arginine 335 each bind IMP. Residue histidine 71 is the Proton donor of the active site. 331–337 (VTTGRKR) serves as a coordination point for substrate. Residues arginine 337, 363 to 365 (KLD), and 445 to 448 (GVGK) contribute to the GTP site.

The protein belongs to the adenylosuccinate synthetase family. Homodimer. The cofactor is Mg(2+). Predominantly expressed in skeletal muscle and heart, as well as in several hematopoietic cell lines and solid tumors.

It is found in the cytoplasm. It carries out the reaction IMP + L-aspartate + GTP = N(6)-(1,2-dicarboxyethyl)-AMP + GDP + phosphate + 2 H(+). It functions in the pathway purine metabolism; AMP biosynthesis via de novo pathway; AMP from IMP: step 1/2. In terms of biological role, component of the purine nucleotide cycle (PNC), which interconverts IMP and AMP to regulate the nucleotide levels in various tissues, and which contributes to glycolysis and ammoniagenesis. Catalyzes the first committed step in the biosynthesis of AMP from IMP. In Homo sapiens (Human), this protein is Adenylosuccinate synthetase isozyme 1.